The sequence spans 240 residues: Lectin (240 aa).

Residues Glu127 and Asp129 each contribute to the Mn(2+) site. Residues Asp129, Tyr131, Asn133, and Asp138 each contribute to the Ca(2+) site. Residues Asp138 and His143 each contribute to the Mn(2+) site.

This sequence belongs to the leguminous lectin family. Heterotetramer of two alpha and two beta chains; disulfide bond linked.

Functionally, binds preferentially to oligosaccharides bearing the sequence Man-alpha-1-&gt;2 Man-alpha-1-&gt;6 Man-alpha-1-&gt;6Man found in early steps of glycoprotein processing in the endoplasmic reticulum. It binds weakly to highly processed oligosaccharide structures. This is Lectin from Leucomphalos mildbraedii (Bowringia mildbraedii).